Consider the following 296-residue polypeptide: Giardin subunit alpha-2 (296 aa).

4 Annexin repeats span residues 2 to 71, 73 to 143, 153 to 223, and 226 to 293; these read PKLS…MDLF, DRHE…MEKW, GSPD…AHFA, and GMHK…TLWR.

The protein belongs to the annexin family. Giardin subunit alpha subfamily.

The protein localises to the cytoplasm. It localises to the cytoskeleton. In terms of biological role, giardins are involved in parasite attachment to the intestinal mucosa and in the cytoskeletal disassembly and reassembly that marks the transition from infectious trophozoite to transmissible cyst. They may interact with other cytoskeletal proteins such as microtubules in the microribbons or crossbridges, to maintain the integrity of the ventral disk. This chain is Giardin subunit alpha-2, found in Giardia intestinalis (Giardia lamblia).